A 186-amino-acid polypeptide reads, in one-letter code: Probable peptidoglycan L,D-endopeptidase MepK (186 aa).

The first 30 residues, methionine 1 to alanine 30, serve as a signal peptide directing secretion. Residues histidine 134, aspartate 141, and histidine 174 each coordinate Zn(2+).

Belongs to the peptidase M15 family. Requires Zn(2+) as cofactor.

The protein operates within cell wall biogenesis; cell wall polysaccharide biosynthesis. Its function is as follows. L,D-endopeptidase that cleaves meso-diaminopimelic acid (mDAP)-mDAP cross-links in peptidoglycan. It works in conjunction with other elongation-specific D,D-endopeptidases to make space for efficient incorporation of nascent peptidoglycan strands into the sacculus and thus enable cell wall expansion. This Haemophilus influenzae (strain ATCC 51907 / DSM 11121 / KW20 / Rd) protein is Probable peptidoglycan L,D-endopeptidase MepK.